The following is a 178-amino-acid chain: GPI mannosyltransferase 2 subunit C167.09 (178 aa).

Residues 1–20 (MREFRLIFVLLFFLPSFAIA) form the signal peptide. Residues 21–152 (NTEIINVETG…LGFLPKSVLP (132 aa)) are Lumenal-facing. N-linked (GlcNAc...) asparagine glycans are attached at residues Asn-48, Asn-49, Asn-106, Asn-115, and Asn-122. A helical transmembrane segment spans residues 153–173 (IVGFVFVIILIALICMTNLFI). Over 174-178 (KHKRD) the chain is Cytoplasmic.

As to quaternary structure, part of the GPI mannosyltransferase 2 complex composed of gpi18 and C167.09.

The protein resides in the endoplasmic reticulum membrane. It participates in glycolipid biosynthesis; glycosylphosphatidylinositol-anchor biosynthesis. Essential component of the GPI mannosyltransferase 2 complex. Responsible for the transfer of the second mannose to the glycosylphosphatidylinositol during GPI precursor assembly. This chain is GPI mannosyltransferase 2 subunit C167.09, found in Schizosaccharomyces pombe (strain 972 / ATCC 24843) (Fission yeast).